We begin with the raw amino-acid sequence, 384 residues long: 1-deoxy-D-xylulose 5-phosphate reductoisomerase (384 aa).

Residues threonine 10, glycine 11, serine 12, isoleucine 13, lysine 37, and asparagine 124 each contribute to the NADPH site. Lysine 125 is a 1-deoxy-D-xylulose 5-phosphate binding site. An NADPH-binding site is contributed by glutamate 126. Aspartate 150 contributes to the Mn(2+) binding site. 4 residues coordinate 1-deoxy-D-xylulose 5-phosphate: serine 151, glutamate 152, serine 176, and histidine 199. Mn(2+) is bound at residue glutamate 152. Residue glycine 205 participates in NADPH binding. 1-deoxy-D-xylulose 5-phosphate contacts are provided by serine 212, asparagine 217, lysine 218, and glutamate 221. Mn(2+) is bound at residue glutamate 221.

It belongs to the DXR family. The cofactor is Mg(2+). Mn(2+) serves as cofactor.

The enzyme catalyses 2-C-methyl-D-erythritol 4-phosphate + NADP(+) = 1-deoxy-D-xylulose 5-phosphate + NADPH + H(+). Its pathway is isoprenoid biosynthesis; isopentenyl diphosphate biosynthesis via DXP pathway; isopentenyl diphosphate from 1-deoxy-D-xylulose 5-phosphate: step 1/6. In terms of biological role, catalyzes the NADPH-dependent rearrangement and reduction of 1-deoxy-D-xylulose-5-phosphate (DXP) to 2-C-methyl-D-erythritol 4-phosphate (MEP). The chain is 1-deoxy-D-xylulose 5-phosphate reductoisomerase from Clostridium tetani (strain Massachusetts / E88).